A 300-amino-acid polypeptide reads, in one-letter code: Ribosomal RNA small subunit methyltransferase A (300 aa).

Asn-36, Val-38, Gly-63, Glu-84, Asp-113, and Asn-131 together coordinate S-adenosyl-L-methionine.

Belongs to the class I-like SAM-binding methyltransferase superfamily. rRNA adenine N(6)-methyltransferase family. RsmA subfamily.

The protein localises to the cytoplasm. It catalyses the reaction adenosine(1518)/adenosine(1519) in 16S rRNA + 4 S-adenosyl-L-methionine = N(6)-dimethyladenosine(1518)/N(6)-dimethyladenosine(1519) in 16S rRNA + 4 S-adenosyl-L-homocysteine + 4 H(+). Its function is as follows. Specifically dimethylates two adjacent adenosines (A1518 and A1519) in the loop of a conserved hairpin near the 3'-end of 16S rRNA in the 30S particle. May play a critical role in biogenesis of 30S subunits. This Kineococcus radiotolerans (strain ATCC BAA-149 / DSM 14245 / SRS30216) protein is Ribosomal RNA small subunit methyltransferase A.